The chain runs to 249 residues: FMN reductase (NADPH) (249 aa).

Belongs to the flavin oxidoreductase frp family. In terms of assembly, homodimer.

The catalysed reaction is FMNH2 + NADP(+) = FMN + NADPH + 2 H(+). Functionally, reduces FMNH(2) to FMN, with NADPH as reductant. It also reduces nitroaromatic compounds, quinones and azo dyes. This chain is FMN reductase (NADPH) (nfrA1), found in Bacillus subtilis (strain 168).